We begin with the raw amino-acid sequence, 393 residues long: DNA-directed RNA polymerase subunit Rpo1C (393 aa).

It belongs to the RNA polymerase beta' chain family. In terms of assembly, part of the RNA polymerase complex.

It localises to the cytoplasm. The catalysed reaction is RNA(n) + a ribonucleoside 5'-triphosphate = RNA(n+1) + diphosphate. DNA-dependent RNA polymerase (RNAP) catalyzes the transcription of DNA into RNA using the four ribonucleoside triphosphates as substrates. Forms part of the jaw domain. The polypeptide is DNA-directed RNA polymerase subunit Rpo1C (Halococcus morrhuae (Micrococcus morrhuae)).